Here is a 466-residue protein sequence, read N- to C-terminus: Glutamate--tRNA ligase (466 aa).

A 'HIGH' region motif is present at residues 11–21 (PSPTGFIHLGN). The 'KMSKS' region signature appears at 243 to 247 (KMSKR). Lys-246 serves as a coordination point for ATP.

The protein belongs to the class-I aminoacyl-tRNA synthetase family. Glutamate--tRNA ligase type 1 subfamily. Monomer.

It localises to the cytoplasm. It catalyses the reaction tRNA(Glu) + L-glutamate + ATP = L-glutamyl-tRNA(Glu) + AMP + diphosphate. Its function is as follows. Catalyzes the attachment of glutamate to tRNA(Glu) in a two-step reaction: glutamate is first activated by ATP to form Glu-AMP and then transferred to the acceptor end of tRNA(Glu). The protein is Glutamate--tRNA ligase of Cupriavidus necator (strain ATCC 17699 / DSM 428 / KCTC 22496 / NCIMB 10442 / H16 / Stanier 337) (Ralstonia eutropha).